The chain runs to 259 residues: Protein GrpE (259 aa).

Disordered stretches follow at residues 1–75 (MNSD…KGSD) and 227–259 (GPGPKAVNEEIPDQSASNQELSESVDGPTKDEN). Low complexity predominate over residues 20–40 (NNPSENFVSSSNSNESVNQVE). The span at 46 to 60 (EVEHQVKNDSVDTAK) shows a compositional bias: basic and acidic residues. The span at 61–73 (EQSSTSCESNIKG) shows a compositional bias: polar residues.

It belongs to the GrpE family. In terms of assembly, homodimer.

Its subcellular location is the cytoplasm. In terms of biological role, participates actively in the response to hyperosmotic and heat shock by preventing the aggregation of stress-denatured proteins, in association with DnaK and GrpE. It is the nucleotide exchange factor for DnaK and may function as a thermosensor. Unfolded proteins bind initially to DnaJ; upon interaction with the DnaJ-bound protein, DnaK hydrolyzes its bound ATP, resulting in the formation of a stable complex. GrpE releases ADP from DnaK; ATP binding to DnaK triggers the release of the substrate protein, thus completing the reaction cycle. Several rounds of ATP-dependent interactions between DnaJ, DnaK and GrpE are required for fully efficient folding. The sequence is that of Protein GrpE from Prochlorococcus marinus (strain NATL1A).